A 241-amino-acid polypeptide reads, in one-letter code: C-type lectin domain family 9 member A (241 aa).

Over 1-34 (MHEEEIYTSLQWDIPTSEASQKCPSLSKCPGTWC) the chain is Cytoplasmic. Positions 5 to 10 (EIYTSL) match the ITAM-like motif. Residues 35-55 (IVTVISCVVCVGLLAASIFLG) form a helical; Signal-anchor for type II membrane protein membrane-spanning segment. The Extracellular segment spans residues 56–241 (IKFSQVSSLV…CEKKAFGSCI (186 aa)). N-linked (GlcNAc...) asparagine glycosylation is found at asparagine 81 and asparagine 88. An intrachain disulfide couples cysteine 113 to cysteine 124. Residues 120-233 (NGKSCYYAFD…CSNWKYFICE (114 aa)) enclose the C-type lectin domain. Asparagine 135, asparagine 161, and asparagine 223 each carry an N-linked (GlcNAc...) asparagine glycan. 2 cysteine pairs are disulfide-bonded: cysteine 141–cysteine 232 and cysteine 211–cysteine 224.

Homodimer. N-glycosylated. As to expression, high expression in the spleen, moderate to low levels in several other tissues and cell types, but no detectable expression in skin dendritic cells or CD4(+) T-cells.

Its subcellular location is the membrane. Functions as an endocytic receptor on a small subset of myeloid cells specialized for the uptake and processing of material from dead cells. Recognizes filamentous form of actin in association with particular actin-binding domains of cytoskeletal proteins, including spectrin, exposed when cell membranes are damaged, and mediate the cross-presentation of dead-cell associated antigens in a Syk-dependent manner. In Rattus norvegicus (Rat), this protein is C-type lectin domain family 9 member A (Clec9a).